We begin with the raw amino-acid sequence, 503 residues long: Lysine--tRNA ligase (503 aa).

Glu-414 and Glu-421 together coordinate Mg(2+).

This sequence belongs to the class-II aminoacyl-tRNA synthetase family. Homodimer. The cofactor is Mg(2+).

The protein localises to the cytoplasm. It carries out the reaction tRNA(Lys) + L-lysine + ATP = L-lysyl-tRNA(Lys) + AMP + diphosphate. The sequence is that of Lysine--tRNA ligase from Neisseria gonorrhoeae (strain NCCP11945).